Here is a 166-residue protein sequence, read N- to C-terminus: Ubiquitin-conjugating enzyme E2 13 (166 aa).

The 161-residue stretch at 4 to 164 (QACLLLQKQL…VSRCVRKSQE (161 aa)) folds into the UBC core domain. C89 acts as the Glycyl thioester intermediate in catalysis.

It belongs to the ubiquitin-conjugating enzyme family.

The enzyme catalyses S-ubiquitinyl-[E1 ubiquitin-activating enzyme]-L-cysteine + [E2 ubiquitin-conjugating enzyme]-L-cysteine = [E1 ubiquitin-activating enzyme]-L-cysteine + S-ubiquitinyl-[E2 ubiquitin-conjugating enzyme]-L-cysteine.. It functions in the pathway protein modification; protein ubiquitination. Accepts the ubiquitin from the E1 complex and catalyzes its covalent attachment to other proteins. Involved in the formation of multiubiquitin chains. Signal the protein for selective degradation. The protein is Ubiquitin-conjugating enzyme E2 13 (UBC13) of Arabidopsis thaliana (Mouse-ear cress).